Here is a 488-residue protein sequence, read N- to C-terminus: Glutamyl-tRNA(Gln) amidotransferase subunit A (488 aa).

Catalysis depends on charge relay system residues Lys80 and Ser155. Catalysis depends on Ser179, which acts as the Acyl-ester intermediate.

Belongs to the amidase family. GatA subfamily. Heterotrimer of A, B and C subunits.

The enzyme catalyses L-glutamyl-tRNA(Gln) + L-glutamine + ATP + H2O = L-glutaminyl-tRNA(Gln) + L-glutamate + ADP + phosphate + H(+). Its function is as follows. Allows the formation of correctly charged Gln-tRNA(Gln) through the transamidation of misacylated Glu-tRNA(Gln) in organisms which lack glutaminyl-tRNA synthetase. The reaction takes place in the presence of glutamine and ATP through an activated gamma-phospho-Glu-tRNA(Gln). The protein is Glutamyl-tRNA(Gln) amidotransferase subunit A of Chloroflexus aggregans (strain MD-66 / DSM 9485).